The chain runs to 176 residues: MDSQVRQNYHRDCEAAVNRMINMELFASYSYTSMAFYFSRDDVALPGFAHFFKENSDEEREHADKLLTFQNSRGGRIFLQDIKKPERDEWGNGVDVMQCALQLEKNVNQALLDLHKIASGKVDPHMCDFLETHYLNEQVESIKKLGDFITNLSRMDAVKNKMAEYLFDKHTMGGKN.

A Ferritin-like diiron domain is found at 7-156 (QNYHRDCEAA…DFITNLSRMD (150 aa)). Positions 24, 59, 62, 104, and 138 each coordinate Fe cation.

This sequence belongs to the ferritin family. In spleen, forms a homomer. The functional molecule forms a roughly spherical shell with a diameter of 12 nm and contains a central cavity into which the insoluble mineral iron core is deposited. Spleen (at protein level).

It catalyses the reaction 4 Fe(2+) + O2 + 4 H(+) = 4 Fe(3+) + 2 H2O. Functionally, stores iron in a soluble, non-toxic, readily available form. Important for iron homeostasis. Has ferroxidase activity. Iron is taken up in the ferrous form and deposited as ferric hydroxides after oxidation. This chain is Ferritin, spleen middle subunit, found in Trematomus bernacchii (Emerald rockcod).